The following is an 803-amino-acid chain: MVVVGGVNTNYRHYALVIVLFFFLNVYLLYSAQNSVQIRKDEGETREKFQTPKVPLVDPISTCEIVDELAKSAISRATSPGCKSKLQLEACQLKNGTFSESFPQSTCSNHQDALIDQRIGCFLDKKDARVLKEFEYKFPQSNSKSTCRKNCYKAGFLYYGLEFGLECFCGNDVANATEIDSGECRNYKCPGAEDEFCGGFNAVEIFRTDKLVMLKPKYLPPAENVSKPPIKILFLLQLNGRNERQVKRFLKSIYLPNHYYYIHVDKRQNYMYSEMAKIAEKVPNIHITSTRYSTIWGGASLLQMFQQVIRDSMEIEMFKDWDYIFNFSESDFPILPIQDFERLITEHQGKSFLASHGYNTGKFIQKQGFEFVFSECDQRMFRIGKREFPENLRIDGGSDWVGIHRDLAEYSISNEELPQKLRKTFESILLPLESFYHTLAFNSKFCDDLMMSNLRLTNWLRKQGCRCASLKQIVDWCGCSPLVFREDTKIKFEMQKAISKPTYFARKFDSMVDIEAIESAEQQSMSTSKIQMDHPTYHFAYANIFKFGIDEEKIAHRSLASFALNTIKSHEKMAKIVQIDALRAHHNAQIEIVMKVETQSGANFEFLIHRKSHVNLSTSGALEVDGYVLKDVVYGTKFEWKEEICREYMGFVTEKDTLHTRLEWSPTERVKKNDKTSPEIEFQYRNGPEKIDKSIVKPYDSVFGGQFDSWDVGKRLSNLSTCPDFFVDVFSPSSSESPLATLRFSVYTEQNVDCHVAYLRDFFEIVDFCTSETACGEKIWSMSYPDPKSDIQVGWDEEARILR.

Residues 3–13 lie on the Cytoplasmic side of the membrane; the sequence is VVGGVNTNYRH. Residues 14 to 34 form a helical; Signal-anchor for type II membrane protein membrane-spanning segment; it reads YALVIVLFFFLNVYLLYSAQN. Residues 35 to 803 lie on the Lumenal side of the membrane; the sequence is SVQIRKDEGE…GWDEEARILR (769 aa). Cys63 and Cys91 are joined by a disulfide. N-linked (GlcNAc...) asparagine glycans are attached at residues Asn95, Asn175, and Asn224. 3 disulfide bridges follow: Cys107–Cys446, Cys465–Cys479, and Cys467–Cys477. A WSC domain is found at 115-209; the sequence is IDQRIGCFLD…FNAVEIFRTD (95 aa). Residues Asp265 and 294-296 contribute to the UDP-alpha-D-xylose site; that span reads TIW. Asn326 carries an N-linked (GlcNAc...) asparagine glycan. Residue 399–400 participates in UDP-alpha-D-xylose binding; the sequence is DW. Residues Ser480 and 506–507 contribute to the UDP-alpha-D-xylose site; that span reads RK. N-linked (GlcNAc...) asparagine glycans are attached at residues Asn615 and Asn718. The cysteines at positions 769 and 775 are disulfide-linked.

It belongs to the glycosyltransferase 14 family. XylT subfamily. A divalent metal cation is required as a cofactor.

The protein localises to the endoplasmic reticulum membrane. It is found in the golgi apparatus membrane. It carries out the reaction UDP-alpha-D-xylose + L-seryl-[protein] = 3-O-(beta-D-xylosyl)-L-seryl-[protein] + UDP + H(+). It functions in the pathway glycan metabolism; chondroitin sulfate biosynthesis. Its pathway is glycan metabolism; heparan sulfate biosynthesis. Catalyzes the first step in biosynthesis of glycosaminoglycan. Transfers D-xylose from UDP-D-xylose to specific serine residues of the core protein. The chain is Xylosyltransferase sqv-6 from Caenorhabditis briggsae.